Here is a 966-residue protein sequence, read N- to C-terminus: Integrator complex subunit 7 (966 aa).

Phosphoserine occurs at positions 338 and 809. Residues 941 to 966 (LQQQAQQPLQPQPLPQPQPRSAYTRF) are disordered.

Belongs to the Integrator subunit 7 family. Component of the Integrator complex, composed of core subunits INTS1, INTS2, INTS3, INTS4, INTS5, INTS6, INTS7, INTS8, INTS9/RC74, INTS10, INTS11/CPSF3L, INTS12, INTS13, INTS14 and INTS15. The core complex associates with protein phosphatase 2A subunits PPP2CA and PPP2R1A, to form the Integrator-PP2A (INTAC) complex. Interacts with NABP2.

It localises to the nucleus. The protein localises to the chromosome. Its subcellular location is the cytoplasm. Component of the integrator complex, a multiprotein complex that terminates RNA polymerase II (Pol II) transcription in the promoter-proximal region of genes. The integrator complex provides a quality checkpoint during transcription elongation by driving premature transcription termination of transcripts that are unfavorably configured for transcriptional elongation: the complex terminates transcription by (1) catalyzing dephosphorylation of the C-terminal domain (CTD) of Pol II subunit POLR2A/RPB1 and SUPT5H/SPT5, (2) degrading the exiting nascent RNA transcript via endonuclease activity and (3) promoting the release of Pol II from bound DNA. The integrator complex is also involved in terminating the synthesis of non-coding Pol II transcripts, such as enhancer RNAs (eRNAs), small nuclear RNAs (snRNAs), telomerase RNAs and long non-coding RNAs (lncRNAs). May be not involved in the recruitment of cytoplasmic dynein to the nuclear envelope by different components of the INT complex. Plays a role in DNA damage response (DDR) signaling during the S phase. This is Integrator complex subunit 7 (Ints7) from Mus musculus (Mouse).